A 96-amino-acid chain; its full sequence is Co-chaperonin GroES (96 aa).

Belongs to the GroES chaperonin family. Heptamer of 7 subunits arranged in a ring. Interacts with the chaperonin GroEL.

It localises to the cytoplasm. In terms of biological role, together with the chaperonin GroEL, plays an essential role in assisting protein folding. The GroEL-GroES system forms a nano-cage that allows encapsulation of the non-native substrate proteins and provides a physical environment optimized to promote and accelerate protein folding. GroES binds to the apical surface of the GroEL ring, thereby capping the opening of the GroEL channel. This Wolbachia sp. subsp. Brugia malayi (strain TRS) protein is Co-chaperonin GroES.